The chain runs to 729 residues: Fatty acid oxidation complex subunit alpha (729 aa).

The interval 1–189 (MLYKGDTLYL…KIGLVDGVVK (189 aa)) is enoyl-CoA hydratase/isomerase. Position 296 (aspartate 296) interacts with substrate. The tract at residues 311 to 729 (ETPKQAAVLG…ARPVGDLKTA (419 aa)) is 3-hydroxyacyl-CoA dehydrogenase. NAD(+)-binding positions include methionine 324, aspartate 343, 400 to 402 (VVE), lysine 407, and serine 429. Histidine 450 serves as the catalytic For 3-hydroxyacyl-CoA dehydrogenase activity. NAD(+) is bound at residue asparagine 453. The substrate site is built by asparagine 500 and tyrosine 660. The tract at residues 707–729 (ARHNEPYYPPVEPARPVGDLKTA) is disordered.

It in the N-terminal section; belongs to the enoyl-CoA hydratase/isomerase family. The protein in the C-terminal section; belongs to the 3-hydroxyacyl-CoA dehydrogenase family. Heterotetramer of two alpha chains (FadB) and two beta chains (FadA).

The catalysed reaction is a (3S)-3-hydroxyacyl-CoA + NAD(+) = a 3-oxoacyl-CoA + NADH + H(+). It carries out the reaction a (3S)-3-hydroxyacyl-CoA = a (2E)-enoyl-CoA + H2O. It catalyses the reaction a 4-saturated-(3S)-3-hydroxyacyl-CoA = a (3E)-enoyl-CoA + H2O. The enzyme catalyses (3S)-3-hydroxybutanoyl-CoA = (3R)-3-hydroxybutanoyl-CoA. The catalysed reaction is a (3Z)-enoyl-CoA = a 4-saturated (2E)-enoyl-CoA. It carries out the reaction a (3E)-enoyl-CoA = a 4-saturated (2E)-enoyl-CoA. The protein operates within lipid metabolism; fatty acid beta-oxidation. Its function is as follows. Involved in the aerobic and anaerobic degradation of long-chain fatty acids via beta-oxidation cycle. Catalyzes the formation of 3-oxoacyl-CoA from enoyl-CoA via L-3-hydroxyacyl-CoA. It can also use D-3-hydroxyacyl-CoA and cis-3-enoyl-CoA as substrate. In Escherichia coli O6:K15:H31 (strain 536 / UPEC), this protein is Fatty acid oxidation complex subunit alpha.